Here is a 454-residue protein sequence, read N- to C-terminus: Chromosomal replication initiator protein DnaA (454 aa).

Positions 1–76 (MNKLKTDLNL…IGASFRILAK (76 aa)) are domain I, interacts with DnaA modulators. Residues 76 to 113 (KNPKIIFAQESPGNGEKATGKKIKSLPREDKSSIFESK) are domain II. A domain III, AAA+ region region spans residues 114 to 330 (GLNTKFSFEN…GALNRLCAYA (217 aa)). The ATP site is built by Gly-158, Gly-160, Lys-161, and Thr-162. Residues 331–454 (SIHKEGKITL…KITEQLTSSQ (124 aa)) form a domain IV, binds dsDNA region.

This sequence belongs to the DnaA family. In terms of assembly, oligomerizes as a right-handed, spiral filament on DNA at oriC.

The protein localises to the cytoplasm. Its function is as follows. Plays an essential role in the initiation and regulation of chromosomal replication. ATP-DnaA binds to the origin of replication (oriC) to initiate formation of the DNA replication initiation complex once per cell cycle. Binds the DnaA box (a 9 base pair repeat at the origin) and separates the double-stranded (ds)DNA. Forms a right-handed helical filament on oriC DNA; dsDNA binds to the exterior of the filament while single-stranded (ss)DNA is stabiized in the filament's interior. The ATP-DnaA-oriC complex binds and stabilizes one strand of the AT-rich DNA unwinding element (DUE), permitting loading of DNA polymerase. After initiation quickly degrades to an ADP-DnaA complex that is not apt for DNA replication. Binds acidic phospholipids. The polypeptide is Chromosomal replication initiator protein DnaA (Methylacidiphilum infernorum (isolate V4) (Methylokorus infernorum (strain V4))).